Consider the following 316-residue polypeptide: Acetyl-coenzyme A carboxylase carboxyl transferase subunit alpha (316 aa).

Residues 40 to 290 (KARKELQRIY…RERFAHHLQE (251 aa)) enclose the CoA carboxyltransferase C-terminal domain.

Belongs to the AccA family. Acetyl-CoA carboxylase is a heterohexamer composed of biotin carboxyl carrier protein (AccB), biotin carboxylase (AccC) and two subunits each of ACCase subunit alpha (AccA) and ACCase subunit beta (AccD).

The protein localises to the cytoplasm. The catalysed reaction is N(6)-carboxybiotinyl-L-lysyl-[protein] + acetyl-CoA = N(6)-biotinyl-L-lysyl-[protein] + malonyl-CoA. Its pathway is lipid metabolism; malonyl-CoA biosynthesis; malonyl-CoA from acetyl-CoA: step 1/1. Its function is as follows. Component of the acetyl coenzyme A carboxylase (ACC) complex. First, biotin carboxylase catalyzes the carboxylation of biotin on its carrier protein (BCCP) and then the CO(2) group is transferred by the carboxyltransferase to acetyl-CoA to form malonyl-CoA. The protein is Acetyl-coenzyme A carboxylase carboxyl transferase subunit alpha of Acidithiobacillus ferrooxidans (strain ATCC 23270 / DSM 14882 / CIP 104768 / NCIMB 8455) (Ferrobacillus ferrooxidans (strain ATCC 23270)).